The chain runs to 534 residues: Glutamyl-tRNA(Gln) amidotransferase subunit B, mitochondrial (534 aa).

A mitochondrion-targeting transit peptide spans 1–28 (MTVLCRLRHCHLSTPTLCRRFHDARVYK).

This sequence belongs to the GatB/GatE family. GatB subfamily. As to quaternary structure, subunit of the heterotrimeric GatCAB amidotransferase (AdT) complex, composed of A, B and C subunits.

Its subcellular location is the mitochondrion. It catalyses the reaction L-glutamyl-tRNA(Gln) + L-glutamine + ATP + H2O = L-glutaminyl-tRNA(Gln) + L-glutamate + ADP + phosphate + H(+). In terms of biological role, allows the formation of correctly charged Gln-tRNA(Gln) through the transamidation of misacylated Glu-tRNA(Gln) in the mitochondria. The reaction takes place in the presence of glutamine and ATP through an activated gamma-phospho-Glu-tRNA(Gln). This Laccaria bicolor (strain S238N-H82 / ATCC MYA-4686) (Bicoloured deceiver) protein is Glutamyl-tRNA(Gln) amidotransferase subunit B, mitochondrial.